We begin with the raw amino-acid sequence, 686 residues long: Mannan-binding lectin serine protease 2 (686 aa).

Positions 1–15 are cleaved as a signal peptide; the sequence is MRLLTLLGLLCGSVA. Residues 16-137 enclose the CUB 1 domain; that stretch reads TPLGPKWPEP…TGFEAFYAAE (122 aa). 8 residues coordinate Ca(2+): glutamate 67, aspartate 75, aspartate 120, serine 122, asparagine 123, aspartate 138, isoleucine 139, and glutamate 141. The cysteines at positions 72 and 90 are disulfide-linked. Residues 138-181 form the EGF-like; calcium-binding domain; the sequence is DIDECQVAPGEAPTCDHHCHNHLGGFYCSCRAGYVLHRNKRTCS. 12 cysteine pairs are disulfide-bonded: cysteine 142/cysteine 156, cysteine 152/cysteine 165, cysteine 167/cysteine 180, cysteine 184/cysteine 211, cysteine 241/cysteine 259, cysteine 300/cysteine 348, cysteine 328/cysteine 361, cysteine 366/cysteine 412, cysteine 396/cysteine 430, cysteine 434/cysteine 552, cysteine 598/cysteine 618, and cysteine 629/cysteine 660. Ca(2+) contacts are provided by asparagine 158, histidine 159, and glycine 162. Residue asparagine 158 is modified to (3R)-3-hydroxyasparagine. Residues 184 to 296 form the CUB 2 domain; it reads CSGQVFTQRS…TGWKIHYTST (113 aa). 2 consecutive Sushi domains span residues 298–363 and 364–432; these read QPCP…ACSI and VDCG…VCEP. Residues 445-684 form the Peptidase S1 domain; it reads IYGGQKAKPG…YIPWIENIIS (240 aa). Residues histidine 483 and aspartate 532 each act as charge relay system in the active site. Serine 633 (charge relay system) is an active-site residue.

The protein belongs to the peptidase S1 family. Homodimer; disulfide-linked. Binds MBL2. Isoform 2 binds to MASP1. Binds SERPING1. Dimerization and MBL2 binding requires calcium ions. Post-translationally, the iron and 2-oxoglutarate dependent 3-hydroxylation of aspartate and asparagine is (R) stereospecific within EGF domains. Activated by cleavage after Arg-444. The uncleaved zymogen is inactive towards synthetic substrates, but has sufficient activity to effect autocatalytic cleavage. Plasma.

The protein resides in the secreted. The catalysed reaction is Selective cleavage after Arg-223 in complement component C2 (-Ser-Leu-Gly-Arg-|-Lys-Ile-Gln-Ile) and after Arg-76 in complement component C4 (-Gly-Leu-Gln-Arg-|-Ala-Leu-Glu-Ile).. In terms of biological role, serum protease that plays an important role in the activation of the complement system via mannose-binding lectin. After activation by auto-catalytic cleavage it cleaves C2 and C4, leading to their activation and to the formation of C3 convertase. The sequence is that of Mannan-binding lectin serine protease 2 (MASP2) from Homo sapiens (Human).